The following is a 512-amino-acid chain: Threonine synthase (512 aa).

The residue at position 121 (K121) is an N6-(pyridoxal phosphate)lysine. Positions 273, 274, 275, 277, and 445 each coordinate pyridoxal 5'-phosphate.

Belongs to the threonine synthase family. Pyridoxal 5'-phosphate serves as cofactor.

The enzyme catalyses O-phospho-L-homoserine + H2O = L-threonine + phosphate. The protein operates within amino-acid biosynthesis; L-threonine biosynthesis; L-threonine from L-aspartate: step 5/5. Functionally, catalyzes the gamma-elimination of phosphate from L-phosphohomoserine and the beta-addition of water to produce L-threonine. The chain is Threonine synthase (THR4) from Eremothecium gossypii (strain ATCC 10895 / CBS 109.51 / FGSC 9923 / NRRL Y-1056) (Yeast).